The primary structure comprises 396 residues: Elongation factor Tu (396 aa).

Residues 10 to 205 (KPHVNVGTIG…AVDEYIPTPE (196 aa)) enclose the tr-type G domain. Positions 19–26 (GHVDHGKT) are G1. Residue 19–26 (GHVDHGKT) coordinates GTP. A Mg(2+)-binding site is contributed by T26. A G2 region spans residues 61-65 (GITIA). Residues 82–85 (DCPG) form a G3 region. GTP contacts are provided by residues 82–86 (DCPGH) and 137–140 (NKTD). The segment at 137 to 140 (NKTD) is G4. The segment at 175-177 (SAL) is G5.

Belongs to the TRAFAC class translation factor GTPase superfamily. Classic translation factor GTPase family. EF-Tu/EF-1A subfamily. Monomer.

The protein resides in the cytoplasm. The catalysed reaction is GTP + H2O = GDP + phosphate + H(+). Functionally, GTP hydrolase that promotes the GTP-dependent binding of aminoacyl-tRNA to the A-site of ribosomes during protein biosynthesis. The polypeptide is Elongation factor Tu (Salinibacter ruber (strain DSM 13855 / M31)).